The sequence spans 657 residues: Tyramine beta-hydroxylase (657 aa).

A helical transmembrane segment spans residues 77–97 (VALLFLLVAYCGGVVHAGEIV). The 112-residue stretch at 103 to 214 (TNVTVKWHTD…GTTQFYIAAS (112 aa)) folds into the DOMON domain. Asparagine 104 and asparagine 143 each carry an N-linked (GlcNAc...) asparagine glycan. The active site involves tyrosine 278. 2 disulfides stabilise this stretch: cysteine 280–cysteine 330 and cysteine 319–cysteine 342. Residues histidine 312 and histidine 313 each contribute to the Cu(2+) site. Cu(2+)-binding residues include histidine 380, histidine 458, histidine 460, and methionine 533. 3 disulfides stabilise this stretch: cysteine 437–cysteine 549, cysteine 441–cysteine 606, and cysteine 512–cysteine 534. Histidine 458 is a catalytic residue. The N-linked (GlcNAc...) asparagine glycan is linked to asparagine 555.

It belongs to the copper type II ascorbate-dependent monooxygenase family. Cu(2+) is required as a cofactor. Present in synaptic regions of RIC interneurons. Present in gonadal sheath cells of hermaphrodites (at protein level).

The protein localises to the membrane. The enzyme catalyses tyramine + L-ascorbate + O2 = (R)-octopamine + L-dehydroascorbate + H2O. Functionally, required for the conversion of tyramine to octopamine, a precursor of octapamine but probably itself a neurotransmitter. Involved in the regulation of egg laying, which is inhibited by tyramine. Due to its involvement in octopamine biosynthesis, also required for crtc-1-dependent regulation of AMPK-mediated longevity. This is Tyramine beta-hydroxylase from Caenorhabditis elegans.